Here is a 496-residue protein sequence, read N- to C-terminus: Cyclin-dependent kinase 16 (496 aa).

The disordered stretch occupies residues 1 to 95 (MDRMKKIKRQ…SATSSDEVQS (95 aa)). S12 is modified (phosphoserine; by BRSK2). Phosphoserine is present on residues S36, S42, S64, S65, S78, S82, and S89. Residues 69 to 78 (IVHEDMKMGS) are compositionally biased toward basic and acidic residues. Residues 83-93 (DQASATSSDEV) are compositionally biased toward polar residues. Phosphoserine; by CDK5 is present on S95. Phosphoserine occurs at positions 110, 119, 138, 146, 153, and 155. Residues 165 to 446 (YIKLDKLGEG…AEDARKHPFF (282 aa)) enclose the Protein kinase domain. ATP-binding positions include 171-179 (LGEGTYATV) and K194. T175 carries the phosphothreonine modification. The active-site Proton acceptor is D286. Position 380 is a phosphothreonine (T380). A phosphoserine mark is found at S391, S478, and S480.

This sequence belongs to the protein kinase superfamily. CMGC Ser/Thr protein kinase family. CDC2/CDKX subfamily. Found in a complex containing CABLES1, CDK17 and TDRD7. Interacts with BRSK2. Identified in a complex with NSF, syntaxin-1, synaptotagmin, SYN1, SYP and CDK5R1. Interacts with YWHAH, YWHAQ and YWHAZ. Interacts with CCNY; this interaction increases the CDK16 kinase activity. Interacts with CCNYL1; this interaction mutually increases the stability of CDK16 and CCNYL1 and increases the kinase activity of CDK16. Interacts with NSF. In terms of processing, phosphorylation of CDK16 is essential for the binding of CCNY, but also essential for the regulation of CDK16 kinase activity. Phosphorylation of CDK16 is essential for the binding of CCNYl1, but also essential for the regulation of CDK16 kinase activity. Ser-146 and Ser-153 are the critical sites for the binding of CCNYL1 and for modulating CDK16 kinase activity. Phosphorylation at Ser-153 inhibits kinase activity. In terms of tissue distribution, highly expressed in testis and brain, and detected at lower levels in heart, skeletal muscle, adipose tissue, lung, spleen and pancreas (at protein level). Ubiquitous with highest levels in testis and brain, with longer form predominant in all tissues except the testis.

Its subcellular location is the cytoplasm. It is found in the cytoplasmic vesicle. The protein resides in the secretory vesicle. The protein localises to the cell membrane. It localises to the synapse. Its subcellular location is the synaptosome. It carries out the reaction L-seryl-[protein] + ATP = O-phospho-L-seryl-[protein] + ADP + H(+). The catalysed reaction is L-threonyl-[protein] + ATP = O-phospho-L-threonyl-[protein] + ADP + H(+). In terms of biological role, protein kinase that plays a role in vesicle-mediated transport processes and exocytosis. Can phosphorylate CCNY at 'Ser-336' (in vitro). Plays a role in the regulation of insulin secretion in response to changes in blood glucose levels. Regulates GH1 release by brain neurons. Phosphorylates NSF, and thereby regulates NSF oligomerization. Required for normal spermatogenesis. Regulates neuron differentiation and dendrite development. This Mus musculus (Mouse) protein is Cyclin-dependent kinase 16 (Cdk16).